The following is a 32-amino-acid chain: Protamine S4 (32 aa).

Residues 1–32 (GCKKRKARKRPKCKKARKRPKCKRRKVAKKKC) are disordered.

As to expression, testis.

The protein localises to the nucleus. It localises to the chromosome. In terms of biological role, protamines substitute for histones in the chromatin of sperm during the haploid phase of spermatogenesis. They compact sperm DNA into a highly condensed, stable and inactive complex. The polypeptide is Protamine S4 (Scyliorhinus canicula (Small-spotted catshark)).